Here is a 217-residue protein sequence, read N- to C-terminus: Homologous-pairing protein 2 homolog (217 aa).

Residues 84–152 (ADLHGLDASI…RLKNIKAATN (69 aa)) adopt a coiled-coil conformation. A DNA-binding region spans residues 118 to 182 (TSALTTPEMQ…WRKRKRMTTE (65 aa)).

This sequence belongs to the HOP2 family. Interacts with the DNA-binding domain of the nuclear receptors NR3C1/GR, ESR2/ER-beta, THRB and RXRA. Forms a stable heterodimer with MND1. Interacts with PSMC3/TBP1. Phosphorylated by PKA, PKC and MAPK. In terms of tissue distribution, highly expressed in testis and more specifically in spermatocytes. Detected in spleen, ovary and thymus.

The protein resides in the nucleus. In terms of biological role, plays an important role in meiotic recombination. Stimulates DMC1-mediated strand exchange required for pairing homologous chromosomes during meiosis. The complex PSMC3IP/MND1 binds DNA, stimulates the recombinase activity of DMC1 as well as DMC1 D-loop formation from double-strand DNA. This complex stabilizes presynaptic RAD51 and DMC1 filaments formed on single strand DNA to capture double-strand DNA. This complex stimulates both synaptic and presynaptic critical steps in RAD51 and DMC1-promoted homologous pairing. May inhibit HIV-1 viral protein TAT activity and modulate the activity of proteasomes through association with PSMC3. The chain is Homologous-pairing protein 2 homolog (Psmc3ip) from Mus musculus (Mouse).